The following is a 224-amino-acid chain: tRNA (guanine-N(7)-)-methyltransferase (224 aa).

The S-adenosyl-L-methionine site is built by Glu57, Asp82, and Asp109. Asp167 is a substrate binding site.

Belongs to the class I-like SAM-binding methyltransferase superfamily. TrmB family.

The catalysed reaction is guanosine(46) in tRNA + S-adenosyl-L-methionine = N(7)-methylguanosine(46) in tRNA + S-adenosyl-L-homocysteine. It participates in tRNA modification; N(7)-methylguanine-tRNA biosynthesis. In terms of biological role, catalyzes the formation of N(7)-methylguanine at position 46 (m7G46) in tRNA. This chain is tRNA (guanine-N(7)-)-methyltransferase, found in Chloroflexus aurantiacus (strain ATCC 29366 / DSM 635 / J-10-fl).